The chain runs to 456 residues: Membrane-bound lytic murein transglycosylase F (456 aa).

The signal sequence occupies residues 1–22; sequence MKTWPSRAVSLLLLALALPVGC. Residues 23 to 267 form a non-LT domain region; the sequence is SEPPPPVRDP…ALDETWFGRF (245 aa). The segment at 268 to 456 is LT domain; sequence GDYDYVDVAR…YRALLAAQDL (189 aa). The active site involves Glu-314.

In the N-terminal section; belongs to the bacterial solute-binding protein 3 family. It in the C-terminal section; belongs to the transglycosylase Slt family.

The protein localises to the cell outer membrane. The enzyme catalyses Exolytic cleavage of the (1-&gt;4)-beta-glycosidic linkage between N-acetylmuramic acid (MurNAc) and N-acetylglucosamine (GlcNAc) residues in peptidoglycan, from either the reducing or the non-reducing ends of the peptidoglycan chains, with concomitant formation of a 1,6-anhydrobond in the MurNAc residue.. Functionally, murein-degrading enzyme that degrades murein glycan strands and insoluble, high-molecular weight murein sacculi, with the concomitant formation of a 1,6-anhydromuramoyl product. Lytic transglycosylases (LTs) play an integral role in the metabolism of the peptidoglycan (PG) sacculus. Their lytic action creates space within the PG sacculus to allow for its expansion as well as for the insertion of various structures such as secretion systems and flagella. This Maricaulis maris (strain MCS10) (Caulobacter maris) protein is Membrane-bound lytic murein transglycosylase F.